The chain runs to 841 residues: Toll-like receptor 4 (841 aa).

Residues 1-23 (MIPRIRLAVATIPAMAFLSCLRS) form the signal peptide. Residues 24 to 632 (ESWDPCVQVV…FRNATCQISE (609 aa)) are Extracellular-facing. A disulfide bridge connects residues Cys29 and Cys40. N-linked (GlcNAc...) asparagine glycosylation is present at Asn35. LRR repeat units follow at residues 55–76 (SVKILDLSFNYLSHLDSNSFSS), 79–100 (ELQVLDLSRCEIQTIDDDAYQG), 103–124 (YLSTLILTGNPIQSLALGAFSG), 127–148 (SLQKLVAVETNLASLEDFPIGH), 151–172 (TLNELNVAHNHIHSFKLPEYFS), 176–197 (NLEHLDLSKNKIENIYHEHLQV), and 205–225 (NLSLDLSLNPLNFIEPGAFNK). N-linked (GlcNAc...) asparagine glycosylation is found at Asn205, Asn238, Asn282, and Asn309. Cys281 and Cys306 are disulfide-bonded. LRR repeat units lie at residues 374–395 (NLQFLDLSGNHLSFKGCCSHNE), 400–422 (KLKHLDLSFNEIITMKSNFMGLE), 423–444 (QLEYLDFQHSSLKQANDFSIFL), 448–469 (NLHYLDISYTNIHVVFRGIFAG), 472–495 (SLQTLKMAGNSFQNNLLPDVFTDL), 497–518 (NLILLDLSKCQLEQVSQRAFHS), 521–542 (RLQVLNMSHNRLLFLDTLPYKP), and 545–568 (SLRILDCSYNLIVASKEQELQHLP). The cysteines at positions 390 and 391 are disulfide-linked. A glycan (N-linked (GlcNAc...) asparagine) is linked at Asn526. Asn575 is a glycosylation site (N-linked (GlcNAc...) asparagine). The region spanning 579-630 (NDFSCACEHQTFLQWVKDQKQLLVGAEQMVCTQPLEMQDLPVLSFRNATCQI) is the LRRCT domain. Cystine bridges form between Cys583–Cys609 and Cys585–Cys628. A glycan (N-linked (GlcNAc...) asparagine) is linked at Asn625. A helical membrane pass occupies residues 633–653 (AVISASVLTFLLVSVAGILVY). Residues 654–841 (KFYFHLLLFV…SNQHDTTAFT (188 aa)) lie on the Cytoplasmic side of the membrane. One can recognise a TIR domain in the interval 673–816 (STYDAFVIYS…IFWRRLKKAL (144 aa)).

The protein belongs to the Toll-like receptor family. As to quaternary structure, belongs to the lipopolysaccharide (LPS) receptor, a multi-protein complex containing at least CD14, LY96 and TLR4. Binding to bacterial LPS leads to homodimerization. Interacts with LY96 via the extracellular domain. Interacts with MYD88 and TIRAP via their respective TIR domains. Interacts with NOX4. Interacts with CNPY3 and HSP90B1; this interaction is required for proper folding in the endoplasmic reticulum. Interacts with MAP3K21; this interaction leads to negative regulation of TLR4 signaling. Interacts with CD36, following CD36 stimulation by oxLDL or amyloid-beta 42, and forms a heterodimer with TLR6. The trimeric complex is internalized and triggers inflammatory response. LYN kinase activity facilitates TLR4-TLR6 heterodimerization and signal initiation. Interacts with TICAM1 in response to LPS in a WDFY1-dependent manner. Interacts with WDFY1 in response to LPS. Interacts with SMPDL3B. Interacts with CEACAM1; upon lipopolysaccharide stimulation, forms a complex including TLR4 and the phosphorylated form of SYK and CEACAM1, which in turn, recruits PTPN6 that dephosphorylates SYK, reducing the production of reactive oxygen species (ROS) and lysosome disruption, which in turn, reduces the activity of the inflammasome. Interacts with RFTN1; the interaction occurs in response to lipopolysaccharide stimulation. Interacts with SCIMP; the interaction occurs in response to lipopolysaccharide stimulation and is enhanced by phosphorylation of SCIMP by LYN. This interaction facilitates the phosphorylation of TLR4 by LYN which elicits a selective cytokine response in macrophages. Interacts with TRAF3IP3. Interacts with TREM1; this interaction enhances TLR4-mediated inflammatory response. Interacts with ZG16B/PAUF. Interacts with CD82; this interaction inhibits TLR4-mediated signaling pathway. In terms of processing, phosphorylated on tyrosine residues by LYN after binding lipopolysaccharide. Post-translationally, ubiquitinated by RNF128 via 'Lys-28'-linked polyubiquitin chains, leading to proteasomal degradation.

Its subcellular location is the cell membrane. The protein resides in the early endosome. The protein localises to the cell projection. It is found in the ruffle. In terms of biological role, transmembrane receptor that functions as a pattern recognition receptor recognizing pathogen- and damage-associated molecular patterns (PAMPs and DAMPs) to induce innate immune responses via downstream signaling pathways. At the plasma membrane, cooperates with LY96 to mediate the innate immune response to bacterial lipopolysaccharide (LPS). Also involved in LPS-independent inflammatory responses triggered by free fatty acids, such as palmitate, and Ni(2+). Mechanistically, acts via MYD88, TIRAP and TRAF6, leading to NF-kappa-B activation, cytokine secretion and the inflammatory response. Alternatively, CD14-mediated TLR4 internalization via endocytosis is associated with the initiation of a MYD88-independent signaling via the TICAM1-TBK1-IRF3 axis leading to type I interferon production. In addition to the secretion of proinflammatory cytokines, initiates the activation of NLRP3 inflammasome and formation of a positive feedback loop between autophagy and NF-kappa-B signaling cascade. In complex with TLR6, promotes inflammation in monocytes/macrophages by associating with TLR6 and the receptor CD86. Upon ligand binding, such as oxLDL or amyloid-beta 42, the TLR4:TLR6 complex is internalized and triggers inflammatory response, leading to NF-kappa-B-dependent production of CXCL1, CXCL2 and CCL9 cytokines, via MYD88 signaling pathway, and CCL5 cytokine, via TICAM1 signaling pathway. In myeloid dendritic cells, vesicular stomatitis virus glycoprotein G but not LPS promotes the activation of IRF7, leading to type I IFN production in a CD14-dependent manner. The chain is Toll-like receptor 4 (TLR4) from Sus scrofa (Pig).